The following is a 120-amino-acid chain: Myohemerythrin (120 aa).

Fe cation contacts are provided by His-26, His-56, Glu-60, His-75, His-79, His-108, and Asp-113.

It belongs to the hemerythrin family.

Myohemerythrin is an oxygen-binding protein found in the retractor muscles of certain worms. The oxygen-binding site contains two iron atoms. The protein is Myohemerythrin of Riftia pachyptila (Vent tube worm).